A 277-amino-acid chain; its full sequence is MNIIDGKQIAQNLRANIKLKVDALDRKPGLAVILVGDDEASEVYVRNKDNACKEVGFYSKKINKPINTTQAELLSEIECLNNSDKIDGILVQLPLPKHLDANLVIEAISPKKDIDGFHSENIGKLMQNKPFLRPCTSKGVMMIFEMIGVNLVGKNCVVVGASNIVGRPMACELLNAQATVTICNSKTKNLSNKLKQADIVVVAVGIAQMIQKDWIKPGSIVIDAGINRLDNNQLVGDVDFESVMQVASWITPVPGGVGPMTIAALLENTLIAYEGKI.

NADP(+) is bound by residues 160 to 162 (GAS), serine 185, and isoleucine 226.

Belongs to the tetrahydrofolate dehydrogenase/cyclohydrolase family. As to quaternary structure, homodimer.

The catalysed reaction is (6R)-5,10-methylene-5,6,7,8-tetrahydrofolate + NADP(+) = (6R)-5,10-methenyltetrahydrofolate + NADPH. It carries out the reaction (6R)-5,10-methenyltetrahydrofolate + H2O = (6R)-10-formyltetrahydrofolate + H(+). It functions in the pathway one-carbon metabolism; tetrahydrofolate interconversion. In terms of biological role, catalyzes the oxidation of 5,10-methylenetetrahydrofolate to 5,10-methenyltetrahydrofolate and then the hydrolysis of 5,10-methenyltetrahydrofolate to 10-formyltetrahydrofolate. This Ruthia magnifica subsp. Calyptogena magnifica protein is Bifunctional protein FolD.